The primary structure comprises 390 residues: Neutrophil cytosol factor 1 (390 aa).

The 122-residue stretch at 4-125 (TFIRHIALLG…DFFKVRPDDL (122 aa)) folds into the PX domain. SH3 domains are found at residues 156-215 (IILQ…PLDS) and 226-285 (YAGE…KSGQ). The segment at 285 to 390 (QDVSQAQRQI…STKRKLASAV (106 aa)) is disordered. 2 positions are modified to phosphoserine: S303 and S304. Residues 309-318 (HSIHQRSRKR) show a composition bias toward basic residues. 4 positions are modified to phosphoserine: S320, S328, S345, and S348.

In terms of assembly, component of the phagocyte NADPH oxidase complex composed of an obligatory core heterodimer formed by the membrane proteins CYBA and CYBB and the cytosolic regulatory subunits NCF1/p47-phox, NCF2/p67-phox, NCF4/p40-phox and the small GTPase RAC1 or RAC2. Part of a cytosolic complex composed at least by NCF1, NCF2 and NCF4. Interacts (via C-terminus) with NCF2 (via the C-terminal SH3 domain). Interacts with NCF4. Interacts with CYBB. Interacts (via the second SH3 domain) with CYBA; interaction is phosphorylation-dependent. Interacts with NOXA1. Interacts with ADAM15. Interacts with TRAF4. Interacts with FASLG. Interacts with PARK7 (via C-terminus); the interaction is enhanced by LPS and modulates NCF1 phosphorylation and membrane translocation. In terms of processing, phosphorylated by PRKCD; phosphorylation induces activation of NCF1, leading to assembly and activation of the NADPH oxidase complex. As to expression, detected in peripheral blood monocytes and neutrophils (at protein level).

The protein resides in the cytoplasm. The protein localises to the cytosol. It is found in the membrane. In terms of biological role, subunit of the phagocyte NADPH oxidase complex that mediates the transfer of electrons from cytosolic NADPH to O2 to produce the superoxide anion (O2(-)). In the activated complex, electrons are first transferred from NADPH to flavin adenine dinucleotide (FAD) and subsequently transferred via two heme molecules to molecular oxygen, producing superoxide through an outer-sphere reaction. Activation of the NADPH oxidase complex is initiated by the assembly of cytosolic subunits of the NADPH oxidase complex with the core NADPH oxidase complex to form a complex at the plasma membrane or phagosomal membrane. This activation process is initiated by phosphorylation dependent binding of the cytosolic NCF1/p47-phox subunit to the C-terminus of CYBA/p22-phox. This chain is Neutrophil cytosol factor 1, found in Homo sapiens (Human).